The following is a 629-amino-acid chain: Chaperone protein DnaK (629 aa).

Over residues 576–587 (QAYQQQQDAQAG) the composition is skewed to low complexity. Residues 576 to 629 (QAYQQQQDAQAGAAGGAGGMGGMGGMADGPGGAADADGDDEEYVDADFEDVDEE) are disordered. Residues 588-607 (AAGGAGGMGGMGGMADGPGG) are compositionally biased toward gly residues. Residues 611 to 629 (ADGDDEEYVDADFEDVDEE) show a composition bias toward acidic residues.

The protein belongs to the heat shock protein 70 family.

Functionally, acts as a chaperone. The protein is Chaperone protein DnaK of Halobacterium salinarum (strain ATCC 29341 / DSM 671 / R1).